Here is a 94-residue protein sequence, read N- to C-terminus: Putative testis-specific prion protein (94 aa).

The first 18 residues, 1-18, serve as a signal peptide directing secretion; it reads MQHSLVFFFAVILHLSHL. Residue asparagine 44 is glycosylated (N-linked (GlcNAc...) asparagine).

As to expression, specifically expressed in adult testis.

It is found in the secreted. This is Putative testis-specific prion protein (PRNT) from Homo sapiens (Human).